Reading from the N-terminus, the 874-residue chain is Probable inorganic carbon transporter subunit DabA (874 aa).

Cysteine 398, aspartate 400, histidine 580, and cysteine 595 together coordinate Zn(2+).

It belongs to the inorganic carbon transporter (TC 9.A.2) DabA family. As to quaternary structure, forms a complex with DabB. It depends on Zn(2+) as a cofactor.

It is found in the cell membrane. Part of an energy-coupled inorganic carbon pump. The chain is Probable inorganic carbon transporter subunit DabA from Bacillus cereus (strain ZK / E33L).